The chain runs to 388 residues: 1-deoxy-D-xylulose 5-phosphate reductoisomerase (388 aa).

The NADPH site is built by threonine 10, glycine 11, serine 12, isoleucine 13, lysine 37, asparagine 38, and asparagine 123. Lysine 124 lines the 1-deoxy-D-xylulose 5-phosphate pocket. Residue glutamate 125 participates in NADPH binding. Aspartate 149 lines the Mn(2+) pocket. The 1-deoxy-D-xylulose 5-phosphate site is built by serine 150, glutamate 151, serine 175, and histidine 198. Glutamate 151 serves as a coordination point for Mn(2+). Glycine 204 serves as a coordination point for NADPH. 1-deoxy-D-xylulose 5-phosphate is bound by residues serine 211, asparagine 216, lysine 217, and glutamate 220. Glutamate 220 contributes to the Mn(2+) binding site.

The protein belongs to the DXR family. Requires Mg(2+) as cofactor. The cofactor is Mn(2+).

The catalysed reaction is 2-C-methyl-D-erythritol 4-phosphate + NADP(+) = 1-deoxy-D-xylulose 5-phosphate + NADPH + H(+). It functions in the pathway isoprenoid biosynthesis; isopentenyl diphosphate biosynthesis via DXP pathway; isopentenyl diphosphate from 1-deoxy-D-xylulose 5-phosphate: step 1/6. In terms of biological role, catalyzes the NADPH-dependent rearrangement and reduction of 1-deoxy-D-xylulose-5-phosphate (DXP) to 2-C-methyl-D-erythritol 4-phosphate (MEP). This is 1-deoxy-D-xylulose 5-phosphate reductoisomerase from Pelagibacter ubique (strain HTCC1062).